Reading from the N-terminus, the 104-residue chain is Nucleoid-associated protein Dtur_0258 (104 aa).

The disordered stretch occupies residues 84 to 104; that stretch reads EKSAEKMGSLTDGLPLPPGLF.

Belongs to the YbaB/EbfC family. In terms of assembly, homodimer.

It localises to the cytoplasm. The protein resides in the nucleoid. Binds to DNA and alters its conformation. May be involved in regulation of gene expression, nucleoid organization and DNA protection. In Dictyoglomus turgidum (strain DSM 6724 / Z-1310), this protein is Nucleoid-associated protein Dtur_0258.